The primary structure comprises 223 residues: MRIFRGCTQPSTLGQGVHSPLMKAQFITHHSRKQVKPGEGWGRSSFTRACRDHTTILSGNRSFSAVAATPAKHKHMHTRTHTHMHTHTGMHTLTGTHVHTPHTQMHTRILTLSHMHTHAHTHAHTHGHTHTRAHSTHAHTHAHSHYHTRTLTLTHSHAHSCTLTSTITHMHTHTHMHTHTSTLTRTLTLTHTHMHTFLSLVSHLAGYISCQFIFSSENPRLCH.

The disordered stretch occupies residues 117–148 (THAHTHAHTHGHTHTRAHSTHAHTHAHSHYHT).

This is an uncharacterized protein from Homo sapiens (Human).